Reading from the N-terminus, the 366-residue chain is UDP-N-acetylglucosamine--N-acetylmuramyl-(pentapeptide) pyrophosphoryl-undecaprenol N-acetylglucosamine transferase (366 aa).

Residues 14–16, Asn125, Arg168, Ser196, and Gln297 contribute to the UDP-N-acetyl-alpha-D-glucosamine site; that span reads TGG.

It belongs to the glycosyltransferase 28 family. MurG subfamily.

Its subcellular location is the cell inner membrane. It catalyses the reaction di-trans,octa-cis-undecaprenyl diphospho-N-acetyl-alpha-D-muramoyl-L-alanyl-D-glutamyl-meso-2,6-diaminopimeloyl-D-alanyl-D-alanine + UDP-N-acetyl-alpha-D-glucosamine = di-trans,octa-cis-undecaprenyl diphospho-[N-acetyl-alpha-D-glucosaminyl-(1-&gt;4)]-N-acetyl-alpha-D-muramoyl-L-alanyl-D-glutamyl-meso-2,6-diaminopimeloyl-D-alanyl-D-alanine + UDP + H(+). It participates in cell wall biogenesis; peptidoglycan biosynthesis. Cell wall formation. Catalyzes the transfer of a GlcNAc subunit on undecaprenyl-pyrophosphoryl-MurNAc-pentapeptide (lipid intermediate I) to form undecaprenyl-pyrophosphoryl-MurNAc-(pentapeptide)GlcNAc (lipid intermediate II). The polypeptide is UDP-N-acetylglucosamine--N-acetylmuramyl-(pentapeptide) pyrophosphoryl-undecaprenol N-acetylglucosamine transferase (Bradyrhizobium diazoefficiens (strain JCM 10833 / BCRC 13528 / IAM 13628 / NBRC 14792 / USDA 110)).